The primary structure comprises 582 residues: Arginine--tRNA ligase (582 aa).

A 'HIGH' region motif is present at residues 128–138 (PNLAKEMHVGH).

This sequence belongs to the class-I aminoacyl-tRNA synthetase family. As to quaternary structure, monomer.

The protein resides in the cytoplasm. It carries out the reaction tRNA(Arg) + L-arginine + ATP = L-arginyl-tRNA(Arg) + AMP + diphosphate. The sequence is that of Arginine--tRNA ligase from Colwellia psychrerythraea (strain 34H / ATCC BAA-681) (Vibrio psychroerythus).